The primary structure comprises 201 residues: Probable chemoreceptor glutamine deamidase CheD (201 aa).

It belongs to the CheD family.

The enzyme catalyses L-glutaminyl-[protein] + H2O = L-glutamyl-[protein] + NH4(+). Probably deamidates glutamine residues to glutamate on methyl-accepting chemotaxis receptors (MCPs), playing an important role in chemotaxis. This chain is Probable chemoreceptor glutamine deamidase CheD, found in Chlorobium luteolum (strain DSM 273 / BCRC 81028 / 2530) (Pelodictyon luteolum).